The primary structure comprises 296 residues: NAD kinase (296 aa).

The active-site Proton acceptor is D72. NAD(+)-binding positions include 72–73 (DG), 146–147 (ND), R157, K174, D176, 187–192 (TAYALS), and Q247.

Belongs to the NAD kinase family. Requires a divalent metal cation as cofactor.

It localises to the cytoplasm. The catalysed reaction is NAD(+) + ATP = ADP + NADP(+) + H(+). Involved in the regulation of the intracellular balance of NAD and NADP, and is a key enzyme in the biosynthesis of NADP. Catalyzes specifically the phosphorylation on 2'-hydroxyl of the adenosine moiety of NAD to yield NADP. In Pseudomonas putida (strain W619), this protein is NAD kinase.